The following is a 233-amino-acid chain: Large ribosomal subunit protein uL1 (233 aa).

The protein belongs to the universal ribosomal protein uL1 family. As to quaternary structure, part of the 50S ribosomal subunit.

In terms of biological role, binds directly to 23S rRNA. The L1 stalk is quite mobile in the ribosome, and is involved in E site tRNA release. Its function is as follows. Protein L1 is also a translational repressor protein, it controls the translation of the L11 operon by binding to its mRNA. The polypeptide is Large ribosomal subunit protein uL1 (Vibrio cholerae serotype O1 (strain ATCC 39315 / El Tor Inaba N16961)).